The sequence spans 283 residues: Glutamate racemase (283 aa).

Substrate-binding positions include 28–29 (DS) and 60–61 (YG). The Proton donor/acceptor role is filled by Cys-92. Position 93 to 94 (93 to 94 (NS)) interacts with substrate. Cys-204 serves as the catalytic Proton donor/acceptor. 205-206 (TH) contacts substrate.

Belongs to the aspartate/glutamate racemases family.

The enzyme catalyses L-glutamate = D-glutamate. It functions in the pathway cell wall biogenesis; peptidoglycan biosynthesis. Provides the (R)-glutamate required for cell wall biosynthesis. The polypeptide is Glutamate racemase (Erwinia tasmaniensis (strain DSM 17950 / CFBP 7177 / CIP 109463 / NCPPB 4357 / Et1/99)).